Reading from the N-terminus, the 185-residue chain is ATP synthase subunit b 2 (185 aa).

Residues 1-26 form a disordered region; the sequence is MAQGHGDAKGTTAHTEAGGGHKAPFP. The chain crosses the membrane as a helical span at residues 37–57; sequence LVSLAIAFVALYLIVSKIALP.

Belongs to the ATPase B chain family. In terms of assembly, F-type ATPases have 2 components, F(1) - the catalytic core - and F(0) - the membrane proton channel. F(1) has five subunits: alpha(3), beta(3), gamma(1), delta(1), epsilon(1). F(0) has three main subunits: a(1), b(2) and c(10-14). The alpha and beta chains form an alternating ring which encloses part of the gamma chain. F(1) is attached to F(0) by a central stalk formed by the gamma and epsilon chains, while a peripheral stalk is formed by the delta and b chains.

It localises to the cell inner membrane. Its function is as follows. F(1)F(0) ATP synthase produces ATP from ADP in the presence of a proton or sodium gradient. F-type ATPases consist of two structural domains, F(1) containing the extramembraneous catalytic core and F(0) containing the membrane proton channel, linked together by a central stalk and a peripheral stalk. During catalysis, ATP synthesis in the catalytic domain of F(1) is coupled via a rotary mechanism of the central stalk subunits to proton translocation. In terms of biological role, component of the F(0) channel, it forms part of the peripheral stalk, linking F(1) to F(0). The b'-subunit is a diverged and duplicated form of b found in plants and photosynthetic bacteria. The chain is ATP synthase subunit b 2 (atpF2) from Rhodopseudomonas palustris (strain ATCC BAA-98 / CGA009).